We begin with the raw amino-acid sequence, 387 residues long: S-adenosylmethionine synthase (387 aa).

Position 17 (histidine 17) interacts with ATP. Aspartate 19 lines the Mg(2+) pocket. Glutamate 45 is a K(+) binding site. The L-methionine site is built by glutamate 58 and glutamine 101. The interval 101–111 (QSPDIAQGVDR) is flexible loop. Residues 168–170 (DAK), 234–235 (RF), aspartate 243, 249–250 (RK), alanine 266, and lysine 270 contribute to the ATP site. Aspartate 243 provides a ligand contact to L-methionine. Position 274 (lysine 274) interacts with L-methionine.

It belongs to the AdoMet synthase family. Homotetramer; dimer of dimers. The cofactor is Mg(2+). K(+) is required as a cofactor.

It localises to the cytoplasm. It catalyses the reaction L-methionine + ATP + H2O = S-adenosyl-L-methionine + phosphate + diphosphate. The protein operates within amino-acid biosynthesis; S-adenosyl-L-methionine biosynthesis; S-adenosyl-L-methionine from L-methionine: step 1/1. Catalyzes the formation of S-adenosylmethionine (AdoMet) from methionine and ATP. The overall synthetic reaction is composed of two sequential steps, AdoMet formation and the subsequent tripolyphosphate hydrolysis which occurs prior to release of AdoMet from the enzyme. This Bordetella bronchiseptica (strain ATCC BAA-588 / NCTC 13252 / RB50) (Alcaligenes bronchisepticus) protein is S-adenosylmethionine synthase.